We begin with the raw amino-acid sequence, 467 residues long: Asparagine--tRNA ligase (467 aa).

It belongs to the class-II aminoacyl-tRNA synthetase family. As to quaternary structure, homodimer.

Its subcellular location is the cytoplasm. The catalysed reaction is tRNA(Asn) + L-asparagine + ATP = L-asparaginyl-tRNA(Asn) + AMP + diphosphate + H(+). The sequence is that of Asparagine--tRNA ligase from Actinobacillus succinogenes (strain ATCC 55618 / DSM 22257 / CCUG 43843 / 130Z).